The chain runs to 95 residues: Large ribosomal subunit protein bL25 (95 aa).

This sequence belongs to the bacterial ribosomal protein bL25 family. As to quaternary structure, part of the 50S ribosomal subunit; part of the 5S rRNA/L5/L18/L25 subcomplex. Contacts the 5S rRNA. Binds to the 5S rRNA independently of L5 and L18.

Functionally, this is one of the proteins that binds to the 5S RNA in the ribosome where it forms part of the central protuberance. In Actinobacillus pleuropneumoniae serotype 5b (strain L20), this protein is Large ribosomal subunit protein bL25.